A 424-amino-acid chain; its full sequence is Putative fasciclin-like arabinogalactan protein 20 (424 aa).

The chain crosses the membrane as a helical span at residues 46 to 66 (LLTTFFLIFFVLDIDLVATSM). The FAS1 1 domain occupies 56–194 (VLDIDLVATS…YVVIYGSDEF (139 aa)). 2 N-linked (GlcNAc...) asparagine glycosylation sites follow: Asn-153 and Asn-160. Residues 199-226 (TKISDDSSSSSSIPSTTSSTGSIPIPSS) show a composition bias toward low complexity. Residues 199–246 (TKISDDSSSSSSIPSTTSSTGSIPIPSSATQTPPSPNIASDSTRNLPN) form a disordered region. The segment covering 227 to 246 (ATQTPPSPNIASDSTRNLPN) has biased composition (polar residues). Asn-246, Asn-283, and Asn-287 each carry an N-linked (GlcNAc...) asparagine glycan. Positions 250–384 (PVNRFNIFES…IAVHGFNQMI (135 aa)) constitute an FAS1 2 domain. The interval 405–424 (QEEEGVHGEYSSELGDYGLH) is disordered.

The protein belongs to the fasciclin-like AGP family.

It is found in the membrane. May be a cell surface adhesion protein. The chain is Putative fasciclin-like arabinogalactan protein 20 (FLA20) from Arabidopsis thaliana (Mouse-ear cress).